We begin with the raw amino-acid sequence, 335 residues long: DNA-directed RNA polymerase subunit alpha (335 aa).

Positions 1 to 233 (MTRTANEFLT…QQIAIFVDLQ (233 aa)) are alpha N-terminal domain (alpha-NTD). Positions 247-335 (VDPILLRPVD…MDDRFAYRSR (89 aa)) are alpha C-terminal domain (alpha-CTD).

The protein belongs to the RNA polymerase alpha chain family. Homodimer. The RNAP catalytic core consists of 2 alpha, 1 beta, 1 beta' and 1 omega subunit. When a sigma factor is associated with the core the holoenzyme is formed, which can initiate transcription.

The enzyme catalyses RNA(n) + a ribonucleoside 5'-triphosphate = RNA(n+1) + diphosphate. In terms of biological role, DNA-dependent RNA polymerase catalyzes the transcription of DNA into RNA using the four ribonucleoside triphosphates as substrates. The chain is DNA-directed RNA polymerase subunit alpha from Acinetobacter baylyi (strain ATCC 33305 / BD413 / ADP1).